Here is a 66-residue protein sequence, read N- to C-terminus: Large ribosomal subunit protein uL29 (66 aa).

It belongs to the universal ribosomal protein uL29 family.

The chain is Large ribosomal subunit protein uL29 from Hydrogenobaculum sp. (strain Y04AAS1).